The sequence spans 619 residues: Chaperone protein DnaK (619 aa).

Position 175 is a phosphothreonine; by autocatalysis (Thr175). Positions 578-619 (NGGAQGEGFDPNNMGGANAGTGAANSNDDNVVDADFEVQDDK) are disordered. Residues 589–606 (NNMGGANAGTGAANSNDD) show a composition bias toward low complexity. Positions 607-619 (NVVDADFEVQDDK) are enriched in acidic residues.

This sequence belongs to the heat shock protein 70 family.

Its function is as follows. Acts as a chaperone. In Clostridium perfringens (strain SM101 / Type A), this protein is Chaperone protein DnaK.